The primary structure comprises 610 residues: ATP-dependent RNA helicase HAS1 (610 aa).

2 disordered regions span residues 1-81 and 112-131; these read MTAA…AELK and ALAVADLPSGTSIPTVDDPT. The span at 9 to 18 shows a compositional bias: basic residues; that stretch reads KKRKRKHKAK. Over residues 51-76 the composition is skewed to acidic residues; sequence PEVEDVVADASENDVESGAEEDEEQV. The short motif at 131–159 is the Q motif element; the sequence is TRFDELNLSERTMEAIKTMGFESMTEIQR. Residues 162 to 337 enclose the Helicase ATP-binding domain; the sequence is IPPLLSGKDV…RISLKAGPLY (176 aa). 175–182 is an ATP binding site; it reads AKTGSGKT. The short motif at 285 to 288 is the DEAD box element; that stretch reads DEAD. The region spanning 351–521 is the Helicase C-terminal domain; that stretch reads GLEQGYVICD…NIQSQLEALI (171 aa). Over residues 584–594 the composition is skewed to basic and acidic residues; sequence DKKVEGRREYG. The tract at residues 584–610 is disordered; that stretch reads DKKVEGRREYGRQPQQGRRPMKPNKRF.

It belongs to the DEAD box helicase family. DDX18/HAS1 subfamily. Associates in the nucleolus with the 60S and pre-60S ribosomal subunits.

It is found in the nucleus. Its subcellular location is the nucleolus. It carries out the reaction ATP + H2O = ADP + phosphate + H(+). Functionally, ATP-dependent RNA helicase involved in 40S ribosomal subunit biogenesis. Required for the processing and cleavage of 35S pre-rRNA at sites A0, A1, and A2, leading to mature 18S rRNA. The polypeptide is ATP-dependent RNA helicase HAS1 (HAS1) (Phaeosphaeria nodorum (strain SN15 / ATCC MYA-4574 / FGSC 10173) (Glume blotch fungus)).